The sequence spans 255 residues: MKIDLNSDLGESFGRYKLGLDEEVMKYITSANIACGWHAGDPLIMRKTVKLAKDMNVEVGAHPGYPDLMGFGRRYMDLTKEEARNYILYQIGALYAFVKAEGLTLQHVKPHGALYNALVRDEELTIGVLEGIADFDKNIIFVGLSMSKPLEIAEEMGLKVAHEVFADRAYNPDGTLVSRRKPGAVIHNKEEIAERVISMVKDGGVKSINGEWVELRADTICVHGDNPKAVEITAYLRKRLEEEGIKIVSMRELIR.

Belongs to the LamB/PxpA family. In terms of assembly, forms a complex composed of PxpA, PxpB and PxpC.

The enzyme catalyses 5-oxo-L-proline + ATP + 2 H2O = L-glutamate + ADP + phosphate + H(+). Catalyzes the cleavage of 5-oxoproline to form L-glutamate coupled to the hydrolysis of ATP to ADP and inorganic phosphate. This Thermococcus sibiricus (strain DSM 12597 / MM 739) protein is 5-oxoprolinase subunit A.